The sequence spans 438 residues: Gamma-glutamyl phosphate reductase (438 aa).

This sequence belongs to the gamma-glutamyl phosphate reductase family.

The protein localises to the cytoplasm. It carries out the reaction L-glutamate 5-semialdehyde + phosphate + NADP(+) = L-glutamyl 5-phosphate + NADPH + H(+). It participates in amino-acid biosynthesis; L-proline biosynthesis; L-glutamate 5-semialdehyde from L-glutamate: step 2/2. Functionally, catalyzes the NADPH-dependent reduction of L-glutamate 5-phosphate into L-glutamate 5-semialdehyde and phosphate. The product spontaneously undergoes cyclization to form 1-pyrroline-5-carboxylate. This Prochlorococcus marinus (strain NATL1A) protein is Gamma-glutamyl phosphate reductase.